A 259-amino-acid polypeptide reads, in one-letter code: Probable 6-phosphogluconolactonase 2 (259 aa).

This sequence belongs to the glucosamine/galactosamine-6-phosphate isomerase family. 6-phosphogluconolactonase subfamily.

The protein resides in the cytoplasm. The protein localises to the cytosol. The enzyme catalyses 6-phospho-D-glucono-1,5-lactone + H2O = 6-phospho-D-gluconate + H(+). It participates in carbohydrate degradation; pentose phosphate pathway; D-ribulose 5-phosphate from D-glucose 6-phosphate (oxidative stage): step 2/3. Catalyzes the hydrolysis of 6-phosphogluconolactone to 6-phosphogluconate. The chain is Probable 6-phosphogluconolactonase 2 from Arabidopsis thaliana (Mouse-ear cress).